Reading from the N-terminus, the 265-residue chain is Very long chain fatty acid elongase 6 (265 aa).

Asn2 carries an N-linked (GlcNAc...) asparagine glycan. The next 7 membrane-spanning stretches (helical) occupy residues 34–51 (FLFS…RHLM), 70–90 (LAVF…YILM), 111–131 (FWAY…IFII), 137–156 (LIFL…WYSY), 159–179 (MVAG…VMYS), 197–217 (FITL…YLVF), and 232–252 (IIWS…FFFE).

This sequence belongs to the ELO family. ELOVL6 subfamily. Post-translationally, N-Glycosylated.

Its subcellular location is the endoplasmic reticulum membrane. It carries out the reaction a very-long-chain acyl-CoA + malonyl-CoA + H(+) = a very-long-chain 3-oxoacyl-CoA + CO2 + CoA. The catalysed reaction is hexadecanoyl-CoA + malonyl-CoA + H(+) = 3-oxooctadecanoyl-CoA + CO2 + CoA. It catalyses the reaction (9Z)-hexadecenoyl-CoA + malonyl-CoA + H(+) = 3-oxo-(11Z)-octadecenoyl-CoA + CO2 + CoA. The enzyme catalyses dodecanoyl-CoA + malonyl-CoA + H(+) = 3-oxotetradecanoyl-CoA + CO2 + CoA. It carries out the reaction tetradecanoyl-CoA + malonyl-CoA + H(+) = 3-oxohexadecanoyl-CoA + CO2 + CoA. The catalysed reaction is (9Z)-octadecenoyl-CoA + malonyl-CoA + H(+) = 3-oxo-(11Z)-eicosenoyl-CoA + CO2 + CoA. It catalyses the reaction (9Z,12Z)-octadecadienoyl-CoA + malonyl-CoA + H(+) = (11Z,14Z)-3-oxoicosa-11,14-dienoyl-CoA + CO2 + CoA. The enzyme catalyses (9Z,12Z,15Z)-octadecatrienoyl-CoA + malonyl-CoA + H(+) = (11Z,14Z,17Z)-3-oxoeicosatrienoyl-CoA + CO2 + CoA. The protein operates within lipid metabolism; fatty acid biosynthesis. Its activity is regulated as follows. The reaction is stimulated by the presence of HSD17B12, the enzyme catalyzing the second step of the elongation cycle. In terms of biological role, catalyzes the first and rate-limiting reaction of the four reactions that constitute the long-chain fatty acids elongation cycle. This endoplasmic reticulum-bound enzymatic process allows the addition of 2 carbons to the chain of long- and very long-chain fatty acids (VLCFAs) per cycle. Condensing enzyme that elongates fatty acids with 12, 14 and 16 carbons with higher activity toward C16:0 acyl-CoAs. Catalyzes the synthesis of unsaturated C16 long chain fatty acids and, to a lesser extent, C18:0 and those with low desaturation degree. May participate in the production of saturated and monounsaturated VLCFAs of different chain lengths that are involved in multiple biological processes as precursors of membrane lipids and lipid mediators. The polypeptide is Very long chain fatty acid elongase 6 (Gallus gallus (Chicken)).